The primary structure comprises 1159 residues: Phosphatidylinositol 3-kinase age-1 (1159 aa).

Residues 1–25 (MSMGRSSSTTFRNRTASHGSRSLGS) are compositionally biased toward polar residues. The interval 1 to 28 (MSMGRSSSTTFRNRTASHGSRSLGSAET) is disordered. Positions 79-179 (SEGVADMIVL…FPMLFLFEPD (101 aa)) constitute a PI3K-ABD domain. The region spanning 272–363 (RKSEANEVWE…YRCPGFVVRR (92 aa)) is the PI3K-RBD domain. The C2 PI3K-type domain maps to 430 to 588 (LDSNLMIRPV…VKMPNEAQYK (159 aa)). The region spanning 607–793 (DYEACIGDPG…SLLMEAYLRG (187 aa)) is the PIK helical domain. Residues 858–1159 (VIEKAIVLGS…NWLFHAMKHY (302 aa)) enclose the PI3K/PI4K catalytic domain. Positions 864–870 (VLGSAKQ) are G-loop. The tract at residues 1028–1036 (GIKDRHSDN) is catalytic loop. Residues 1047 to 1073 (HIDFGHILGHGKTKLGIQRDRQPFILT) form an activation loop region.

Belongs to the PI3/PI4-kinase family.

The catalysed reaction is a 1,2-diacyl-sn-glycero-3-phospho-(1D-myo-inositol) + ATP = a 1,2-diacyl-sn-glycero-3-phospho-(1D-myo-inositol-3-phosphate) + ADP + H(+). In terms of biological role, phosphatidylinositol 3-kinase homolog that regulates longevity and diapause. Promotes cell survival during embryonic development by recruiting akt-1/2 to the plasma membrane through the production of PtdIns(3,4,5)P3. Could function in the development or neuroendocrine signaling of the dauer pathway. Mediates susceptibility to enteropathogenic E.coli infection. May negatively regulate AYI interneuron neurite outgrowth. Plays a role in aversive olfactory learning when an odor is associated with food deprivation. Regulates this process by promoting the nuclear relocalization of egl-4 in AWC olfactory neurons after odor conditioning. The sequence is that of Phosphatidylinositol 3-kinase age-1 (age-1) from Caenorhabditis briggsae.